The following is a 609-amino-acid chain: Glutamine--fructose-6-phosphate aminotransferase [isomerizing] (609 aa).

The active-site Nucleophile; for GATase activity is Cys-2. Positions 2–217 (CGIVGAIAGR…EGDTAELRRD (216 aa)) constitute a Glutamine amidotransferase type-2 domain. 2 consecutive SIS domains span residues 284–425 (TADA…LQGR) and 458–599 (WAER…VDKP). The active-site For Fru-6P isomerization activity is the Lys-604.

In terms of assembly, homodimer.

It is found in the cytoplasm. The catalysed reaction is D-fructose 6-phosphate + L-glutamine = D-glucosamine 6-phosphate + L-glutamate. Its function is as follows. Catalyzes the first step in hexosamine metabolism, converting fructose-6P into glucosamine-6P using glutamine as a nitrogen source. This is Glutamine--fructose-6-phosphate aminotransferase [isomerizing] from Xanthomonas campestris pv. campestris (strain ATCC 33913 / DSM 3586 / NCPPB 528 / LMG 568 / P 25).